Reading from the N-terminus, the 463-residue chain is MPSCTTPTYGVSTQLESQSSESPSRSSVMTPTSLDGDNSPRKRFPIIDNVPADRWPSTRRDGWSSVRAPPPARLTLSTNNRHIMSPISSAYSQTPNSLLSPAMFNPKSRSIFSPTLPATPMSYGKSSMDKSLFSPTATEPIEVEATVEYLADLVKEKKHLTLFPHMFSNVERLLDDEIGRVRVALFQTEFPRVELPEPAGDMISITEKIYVPKNEYPDYNFVGRILGPRGMTAKQLEQDTGCKIMVRGKGSMRDKSKESAHRGKANWEHLEDDLHVLVQCEDTENRVHIKLQAALEQVKKLLIPAPEGTDELKRKQLMELAIINGTYRPMKSPNPARVMTAVPLLSPTPLRSSGPVLMSPTPGSGLPSTTFGGSILSPTLTASNLLGSNVFDYSLLSPSMFDSFSSLQLASDLTFPKYPTTTSFVNSFPGLFTSASSFANQTNTNVSPSGASPSASSVNNTSF.

Polar residues predominate over residues 1 to 10 (MPSCTTPTYG). A disordered region spans residues 1–76 (MPSCTTPTYG…RAPPPARLTL (76 aa)). Low complexity predominate over residues 11-31 (VSTQLESQSSESPSRSSVMTP). The qua1 domain; involved in homodimerization stretch occupies residues 135 to 205 (PTATEPIEVE…PEPAGDMISI (71 aa)). Residues 208–260 (KIYVPKNEYPDYNFVGRILGPRGMTAKQLEQDTGCKIMVRGKGSMRDKSKESA) form the KH domain. The qua2 domain; involved in RNA binding stretch occupies residues 305 to 336 (APEGTDELKRKQLMELAIINGTYRPMKSPNPA). The tract at residues 443 to 463 (NTNVSPSGASPSASSVNNTSF) is disordered. Residues 447 to 457 (SPSGASPSASS) are compositionally biased toward low complexity.

As to quaternary structure, homodimer. Post-translationally, phosphorylated by cdk-2 which may negatively regulate its expression in distal mitotic germline cells. In terms of processing, undergoes proteasomal degradation in proximal oocytes following mating. As to expression, expressed in proximal and distal oocytes in female worms but is eliminated from proximal oocytes following mating.

In terms of biological role, RNA-binding protein which recognizes the 5'-UACUCAU-3' RNA consensus sequence. Binds sequences in both the 5'coding and the 3'-UTR region of rme-2 mRNA. Binds sequences in the 3'-UTR region of cye-1 mRNA. Binds to cyb-2.1, cyb-2.2 and cyb-3 mRNA. Binds sequences in the 3'-UTR region of tra-2 mRNA. Binds to the 3' UTR of Notch receptor homolog glp-1, thereby repressing glp-1 translation in the embryo. Binding to the glp-1 3' UTR is inhibited by pos-1 binding to an overlapping binding site in the glp-1 3' UTR. Germ line-specific tumor suppressor essential for oogenesis. Controls the spatial pattern of translation of multiple oogenesis specific mRNAs (e.g. yolk receptor rme-2) by repression of translation during early meiotic prophase (leptotene to pachytene) and then derepression of translation during diplotene/ diakinesis, following its degradation. Also functions to promote the male sexual fate in the hermaphrodite germline but not the male germline. Represses translation of the vacuolar ATPase component vha-13 in the distal gonad. Functions redundantly with gld-2 to promote the initiation of meiotic development and/or inhibit stem cell proliferation. By regulating cye-1 expression, prevents entry into mitosis in meiotic germline cells. This is Female germline-specific tumor suppressor gld-1 (gld-1) from Caenorhabditis elegans.